A 136-amino-acid polypeptide reads, in one-letter code: Small ribosomal subunit protein uS8 (136 aa).

The protein belongs to the universal ribosomal protein uS8 family. As to quaternary structure, part of the 30S ribosomal subunit. Contacts proteins S5 and S12.

Its function is as follows. One of the primary rRNA binding proteins, it binds directly to 16S rRNA central domain where it helps coordinate assembly of the platform of the 30S subunit. This is Small ribosomal subunit protein uS8 from Frankia alni (strain DSM 45986 / CECT 9034 / ACN14a).